The sequence spans 309 residues: Glutaminase (309 aa).

Positions 65, 117, 162, 169, 193, 245, and 263 each coordinate substrate.

It belongs to the glutaminase family. Homotetramer.

The catalysed reaction is L-glutamine + H2O = L-glutamate + NH4(+). The polypeptide is Glutaminase (Geobacillus thermodenitrificans (strain NG80-2)).